The chain runs to 28 residues: MGEVFAGGFALLVVLFILLIIIGASWLY.

A helical transmembrane segment spans residues 4–24; sequence VFAGGFALLVVLFILLIIIGA.

The protein belongs to the SscA family.

Its subcellular location is the membrane. This chain is Probable small spore coat assembly protein B, found in Bacillus subtilis (strain 168).